Here is a 244-residue protein sequence, read N- to C-terminus: High affinity immunoglobulin epsilon receptor subunit beta (244 aa).

The Cytoplasmic portion of the chain corresponds to 1–59 (MDTESNRRANLALPQEPSSVPAFEVLEISPQEVSSGRLLKSASSPPLHTWLTVLKKEQE). Residues 60–79 (FLGVTQILTAMICLCFGTVV) form a helical membrane-spanning segment. At 80–97 (CSVLDISHIEGDIFSSFK) the chain is on the extracellular side. The chain crosses the membrane as a helical span at residues 98–117 (AGYPFWGAIFFSISGMLSII). Over 118–130 (SERRNATYLVRGS) the chain is Cytoplasmic. The chain crosses the membrane as a helical span at residues 131-150 (LGANTASSIAGGTGITILII). Residues 151–180 (NLKKSLAYIHIHSCQKFFETKCFMASFSTE) are Extracellular-facing. The chain crosses the membrane as a helical span at residues 181–200 (IVVMMLFLTILGLGSAVSLT). The Cytoplasmic portion of the chain corresponds to 201 to 244 (ICGAGEELKGNKVPEDRVYEELNIYSATYSELEDPGEMSPPIDL). Phosphotyrosine occurs at positions 219 and 225. The residue at position 226 (S226) is a Phosphoserine. Y229 is modified (phosphotyrosine).

Belongs to the MS4A family. As to quaternary structure, tetramer of an alpha chain, a beta chain, and two disulfide linked gamma chains. Binds LILRB1. Interacts with FGR, FES/FPS and LYN. Post-translationally, phosphorylated on tyrosine residues by LYN. In terms of tissue distribution, found on the surface of mast cells and basophils.

The protein localises to the membrane. In terms of biological role, high affinity receptor that binds to the Fc region of immunoglobulins epsilon. Aggregation of FCER1 by multivalent antigens is required for the full mast cell response, including the release of preformed mediators (such as histamine) by degranulation and de novo production of lipid mediators and cytokines. Also mediates the secretion of important lymphokines. Binding of allergen to receptor-bound IgE leads to cell activation and the release of mediators responsible for the manifestations of allergy. This Homo sapiens (Human) protein is High affinity immunoglobulin epsilon receptor subunit beta (MS4A2).